The sequence spans 703 residues: Epidermal growth factor receptor (703 aa).

The N-terminal stretch at 1–30 is a signal peptide; it reads MGVRSPLSASGPRGAAVLVLLLLGVALCSA. The Extracellular portion of the chain corresponds to 31–654; sequence VEEKKVCQGT…GCPNGSKTPS (624 aa). C37 and C64 are oxidised to a cystine. Residues N134, N190, and N200 are each glycosylated (N-linked (GlcNAc...) asparagine). Cystine bridges form between C164–C194, C197–C206, C201–C214, C222–C230, C226–C238, C239–C247, C243–C255, C258–C267, C271–C298, C302–C314, C318–C333, C336–C340, and C344–C369. Residues N359, N368, and N420 are each glycosylated (N-linked (GlcNAc...) asparagine). 11 cysteine pairs are disulfide-bonded: C477/C506, C513/C522, C517/C530, C533/C542, C546/C562, C565/C581, C569/C589, C592/C601, C605/C627, C630/C638, and C634/C646. N-linked (GlcNAc...) asparagine glycosylation is found at N573 and N578. N-linked (GlcNAc...) asparagine glycans are attached at residues N613 and N633. A glycan (N-linked (GlcNAc...) asparagine) is linked at N648. A helical transmembrane segment spans residues 655–667; sequence IAAGVVGGLLCLV. Topologically, residues 668–703 are cytoplasmic; sequence VVGLGIGLYLRRRHIVRKRTLRRLLQERELVEPLTP. Phosphothreonine occurs at positions 687 and 702.

This sequence belongs to the protein kinase superfamily. Tyr protein kinase family. EGF receptor subfamily. As to quaternary structure, binding of the ligand triggers homo- and/or heterodimerization of the receptor triggering its autophosphorylation. Phosphorylated. Autophosphorylates.

Its subcellular location is the cell membrane. The protein resides in the endoplasmic reticulum membrane. It localises to the golgi apparatus membrane. It is found in the nucleus membrane. The protein localises to the endosome. Its subcellular location is the endosome membrane. The protein resides in the nucleus. The enzyme catalyses L-tyrosyl-[protein] + ATP = O-phospho-L-tyrosyl-[protein] + ADP + H(+). Endocytosis and inhibition of the activated EGFR by phosphatases constitute immediate regulatory mechanisms. Moreover, inducible feedback inhibitors may constitute alternative regulatory mechanisms for the EGFR signaling. Functionally, receptor tyrosine kinase binding ligands of the EGF family and activating several signaling cascades to convert extracellular cues into appropriate cellular responses. Known ligands include EGF and TGFA/TGF-alpha. Ligand binding triggers receptor homo- and/or heterodimerization and autophosphorylation on key cytoplasmic residues. The phosphorylated receptor recruits adapter proteins like GRB2 which in turn activates complex downstream signaling cascades. Activates at least 4 major downstream signaling cascades including the RAS-RAF-MEK-ERK, PI3 kinase-AKT, PLCgamma-PKC and STATs modules. May also activate the NF-kappa-B signaling cascade. In Gallus gallus (Chicken), this protein is Epidermal growth factor receptor (EGFR).